Reading from the N-terminus, the 87-residue chain is U3-theraphotoxin-Hhn1a 3 (87 aa).

A signal peptide spans 1–24 (MVNMKASMFLTFAGLVLLFVVCYA). Positions 25 to 52 (PESEEKEFPKEMLSSIFAVDNDFKQEER) are excised as a propeptide. Intrachain disulfides connect Cys-54–Cys-67, Cys-61–Cys-72, and Cys-66–Cys-79.

Belongs to the neurotoxin 10 (Hwtx-1) family. 51 (Hntx-8) subfamily. Hntx-8 sub-subfamily. As to expression, expressed by the venom gland.

Its subcellular location is the secreted. Functionally, ion channel inhibitor. The sequence is that of U3-theraphotoxin-Hhn1a 3 from Cyriopagopus hainanus (Chinese bird spider).